The primary structure comprises 280 residues: Phosphatidylglycerol--prolipoprotein diacylglyceryl transferase (280 aa).

4 helical membrane-spanning segments follow: residues 26-46 (LAIH…WFYA), 71-91 (FILW…ILFY), 106-126 (IWNG…AMIL), and 132-152 (GIPV…GLLF). Arginine 154 contributes to the a 1,2-diacyl-sn-glycero-3-phospho-(1'-sn-glycerol) binding site. 3 helical membrane-spanning segments follow: residues 193–213 (GLEG…FKAL), 217–237 (GTVT…VEFF), and 251–271 (WLTM…WAVL).

It belongs to the Lgt family.

Its subcellular location is the cell inner membrane. It catalyses the reaction L-cysteinyl-[prolipoprotein] + a 1,2-diacyl-sn-glycero-3-phospho-(1'-sn-glycerol) = an S-1,2-diacyl-sn-glyceryl-L-cysteinyl-[prolipoprotein] + sn-glycerol 1-phosphate + H(+). It functions in the pathway protein modification; lipoprotein biosynthesis (diacylglyceryl transfer). Its function is as follows. Catalyzes the transfer of the diacylglyceryl group from phosphatidylglycerol to the sulfhydryl group of the N-terminal cysteine of a prolipoprotein, the first step in the formation of mature lipoproteins. The polypeptide is Phosphatidylglycerol--prolipoprotein diacylglyceryl transferase (Agrobacterium fabrum (strain C58 / ATCC 33970) (Agrobacterium tumefaciens (strain C58))).